Consider the following 153-residue polypeptide: uncharacterized protein (153 aa).

The signal sequence occupies residues 1 to 22; it reads MKLLKKGTTVLFVMIMAVMLVA. A lipid anchor (N-palmitoyl cysteine) is attached at Cys-23. The S-diacylglycerol cysteine moiety is linked to residue Cys-23. Residues 121–153 are disordered; it reads LPGMASTGDVSKGISMKESEKMLKSQGFKEVEK. Residues 135-153 show a composition bias toward basic and acidic residues; it reads SMKESEKMLKSQGFKEVEK.

The protein to E.coli YehR.

It is found in the cell membrane. This is an uncharacterized protein from Listeria innocua serovar 6a (strain ATCC BAA-680 / CLIP 11262).